The chain runs to 122 residues: Large ribosomal subunit protein uL14c (122 aa).

It belongs to the universal ribosomal protein uL14 family. In terms of assembly, part of the 50S ribosomal subunit.

The protein localises to the plastid. It is found in the chloroplast. Functionally, binds to 23S rRNA. This is Large ribosomal subunit protein uL14c from Nicotiana sylvestris (Wood tobacco).